The chain runs to 185 residues: Ribosome-recycling factor (185 aa).

This sequence belongs to the RRF family.

The protein localises to the cytoplasm. In terms of biological role, responsible for the release of ribosomes from messenger RNA at the termination of protein biosynthesis. May increase the efficiency of translation by recycling ribosomes from one round of translation to another. In Treponema denticola (strain ATCC 35405 / DSM 14222 / CIP 103919 / JCM 8153 / KCTC 15104), this protein is Ribosome-recycling factor.